Here is a 104-residue protein sequence, read N- to C-terminus: Small ribosomal subunit protein uS10 (104 aa).

The protein belongs to the universal ribosomal protein uS10 family. In terms of assembly, part of the 30S ribosomal subunit.

Its function is as follows. Involved in the binding of tRNA to the ribosomes. In Helicobacter pylori (strain P12), this protein is Small ribosomal subunit protein uS10.